A 107-amino-acid polypeptide reads, in one-letter code: U1-lycotoxin-Ls1l (107 aa).

A signal peptide spans 1 to 20; it reads MMKVLVVVALLVTLISYSSS. Positions 21–41 are excised as a propeptide; that stretch reads EGIDDLEADELLSLMANEQTR. Cystine bridges form between Cys44–Cys59, Cys51–Cys68, Cys58–Cys86, and Cys70–Cys84.

Belongs to the neurotoxin 19 (CSTX) family. 04 (U1-Lctx) subfamily. Expressed by the venom gland.

The protein resides in the secreted. The polypeptide is U1-lycotoxin-Ls1l (Lycosa singoriensis (Wolf spider)).